Reading from the N-terminus, the 252-residue chain is 3-dehydroquinate dehydratase (252 aa).

3-dehydroquinate is bound by residues Ser21, 46-48 (EWR), and Arg82. His143 functions as the Proton donor/acceptor in the catalytic mechanism. Lys170 (schiff-base intermediate with substrate) is an active-site residue. 3-dehydroquinate contacts are provided by Arg213, Ser232, and Gln236.

Belongs to the type-I 3-dehydroquinase family. In terms of assembly, homodimer.

It catalyses the reaction 3-dehydroquinate = 3-dehydroshikimate + H2O. It functions in the pathway metabolic intermediate biosynthesis; chorismate biosynthesis; chorismate from D-erythrose 4-phosphate and phosphoenolpyruvate: step 3/7. Involved in the third step of the chorismate pathway, which leads to the biosynthesis of aromatic amino acids. Catalyzes the cis-dehydration of 3-dehydroquinate (DHQ) and introduces the first double bond of the aromatic ring to yield 3-dehydroshikimate. The sequence is that of 3-dehydroquinate dehydratase from Escherichia coli O127:H6 (strain E2348/69 / EPEC).